Consider the following 185-residue polypeptide: Ribosome-recycling factor (185 aa).

It belongs to the RRF family.

It is found in the cytoplasm. In terms of biological role, responsible for the release of ribosomes from messenger RNA at the termination of protein biosynthesis. May increase the efficiency of translation by recycling ribosomes from one round of translation to another. The sequence is that of Ribosome-recycling factor from Listeria monocytogenes serotype 4a (strain HCC23).